Here is an 821-residue protein sequence, read N- to C-terminus: TORTIFOLIA1-like protein 1 (821 aa).

HEAT repeat units lie at residues 69–110, 114–151, 163–201, 205–242, and 245–282; these read PDSP…SYTD, SQLA…QFLK, SSLV…SATE, AAFQ…VGAI, and QSLE…HSSS. Ser406 is modified (phosphoserine). 2 disordered regions span residues 416–437 and 553–610; these read PSRQ…NTSV and MSIQ…RAWD. A coiled-coil region spans residues 501–554; it reads PPLQRQLLHLERQQTHIMNMLQDFMGGSHDGMISLENRVRGLERIVEEMSREMS. Positions 579–590 are enriched in polar residues; sequence YGPSSRNTQTST.

As to expression, expressed at low levels in roots, hypocotyls, stems, flowers, siliques, cotyledons, and leaves. Particularly present in hydathodes of cotyledons and root hairs.

The protein resides in the cytoplasm. It is found in the cytoskeleton. Its function is as follows. Plant-specific microtubule-associated protein (MAP) that regulates the orientation of cortical microtubules and the direction of organ growth. In Arabidopsis thaliana (Mouse-ear cress), this protein is TORTIFOLIA1-like protein 1.